The primary structure comprises 149 residues: Large ribosomal subunit protein bL9 (149 aa).

Belongs to the bacterial ribosomal protein bL9 family.

Functionally, binds to the 23S rRNA. The protein is Large ribosomal subunit protein bL9 of Teredinibacter turnerae (strain ATCC 39867 / T7901).